The chain runs to 65 residues: Large ribosomal subunit protein bL31 (65 aa).

Zn(2+) contacts are provided by C16, C18, C36, and C39.

The protein belongs to the bacterial ribosomal protein bL31 family. Type A subfamily. Part of the 50S ribosomal subunit. Requires Zn(2+) as cofactor.

Binds the 23S rRNA. The polypeptide is Large ribosomal subunit protein bL31 (Geotalea uraniireducens (strain Rf4) (Geobacter uraniireducens)).